Reading from the N-terminus, the 610-residue chain is Glutamine--fructose-6-phosphate aminotransferase [isomerizing] (610 aa).

The active-site Nucleophile; for GATase activity is the Cys-2. The Glutamine amidotransferase type-2 domain occupies 2-217 (CGIVGYVGQK…DKEFVVLTND (216 aa)). SIS domains follow at residues 284-424 (ITKE…LKGS) and 453-600 (LIKE…VDKP). Catalysis depends on Lys-605, which acts as the For Fru-6P isomerization activity.

As to quaternary structure, homodimer.

The protein localises to the cytoplasm. It carries out the reaction D-fructose 6-phosphate + L-glutamine = D-glucosamine 6-phosphate + L-glutamate. Catalyzes the first step in hexosamine metabolism, converting fructose-6P into glucosamine-6P using glutamine as a nitrogen source. The protein is Glutamine--fructose-6-phosphate aminotransferase [isomerizing] of Clostridium perfringens (strain 13 / Type A).